The chain runs to 87 residues: HssA/B-like protein 58 (87 aa).

A compositionally biased stretch (polar residues) spans 1-13 (MTILSAITSISRP). The tract at residues 1 to 31 (MTILSAITSISRPNKSSKSVISSNGGSSLSM) is disordered. Positions 14–31 (NKSSKSVISSNGGSSLSM) are enriched in low complexity.

It belongs to the hssA/B family.

The sequence is that of HssA/B-like protein 58 (hssl58) from Dictyostelium discoideum (Social amoeba).